The chain runs to 95 residues: Aspartyl/glutamyl-tRNA(Asn/Gln) amidotransferase subunit C (95 aa).

It belongs to the GatC family. As to quaternary structure, heterotrimer of A, B and C subunits.

The catalysed reaction is L-glutamyl-tRNA(Gln) + L-glutamine + ATP + H2O = L-glutaminyl-tRNA(Gln) + L-glutamate + ADP + phosphate + H(+). It catalyses the reaction L-aspartyl-tRNA(Asn) + L-glutamine + ATP + H2O = L-asparaginyl-tRNA(Asn) + L-glutamate + ADP + phosphate + 2 H(+). Allows the formation of correctly charged Asn-tRNA(Asn) or Gln-tRNA(Gln) through the transamidation of misacylated Asp-tRNA(Asn) or Glu-tRNA(Gln) in organisms which lack either or both of asparaginyl-tRNA or glutaminyl-tRNA synthetases. The reaction takes place in the presence of glutamine and ATP through an activated phospho-Asp-tRNA(Asn) or phospho-Glu-tRNA(Gln). The sequence is that of Aspartyl/glutamyl-tRNA(Asn/Gln) amidotransferase subunit C from Chelativorans sp. (strain BNC1).